We begin with the raw amino-acid sequence, 247 residues long: Anionic trypsin (247 aa).

The N-terminal stretch at 1 to 15 (MHPLLILAFVGAAVA) is a signal peptide. Positions 16–23 (FPSDDDDK) are cleaved as a propeptide — activation peptide. The 221-residue stretch at 24 to 244 (IVGGYTCAEN…YVDWIQETIA (221 aa)) folds into the Peptidase S1 domain. 6 cysteine pairs are disulfide-bonded: cysteine 30-cysteine 160, cysteine 48-cysteine 64, cysteine 132-cysteine 233, cysteine 139-cysteine 206, cysteine 171-cysteine 185, and cysteine 196-cysteine 220. Histidine 63 serves as the catalytic Charge relay system. Ca(2+) contacts are provided by glutamate 75, asparagine 77, valine 80, and glutamate 85. Residue aspartate 107 is the Charge relay system of the active site. The active-site Charge relay system is serine 200.

It belongs to the peptidase S1 family. Ca(2+) serves as cofactor. Post-translationally, not sulfated on tyrosine residue(s).

Its subcellular location is the secreted. The protein resides in the extracellular space. The catalysed reaction is Preferential cleavage: Arg-|-Xaa, Lys-|-Xaa.. This is Anionic trypsin from Bos taurus (Bovine).